We begin with the raw amino-acid sequence, 75 residues long: Small ribosomal subunit protein bS18 (75 aa).

It belongs to the bacterial ribosomal protein bS18 family. As to quaternary structure, part of the 30S ribosomal subunit. Forms a tight heterodimer with protein bS6.

Binds as a heterodimer with protein bS6 to the central domain of the 16S rRNA, where it helps stabilize the platform of the 30S subunit. The sequence is that of Small ribosomal subunit protein bS18 from Wigglesworthia glossinidia brevipalpis.